A 513-amino-acid polypeptide reads, in one-letter code: L-threonine dehydratase biosynthetic IlvA (513 aa).

N6-(pyridoxal phosphate)lysine is present on K61. Pyridoxal 5'-phosphate-binding positions include N88, 187-191, and S314; that span reads GGGGL. 2 consecutive ACT-like domains span residues 338–409 and 432–504; these read ALLA…DLSN and RLYS…DVTE.

Belongs to the serine/threonine dehydratase family. Homotetramer. Pyridoxal 5'-phosphate is required as a cofactor.

The enzyme catalyses L-threonine = 2-oxobutanoate + NH4(+). The protein operates within amino-acid biosynthesis; L-isoleucine biosynthesis; 2-oxobutanoate from L-threonine: step 1/1. Its function is as follows. Catalyzes the anaerobic formation of alpha-ketobutyrate and ammonia from threonine in a two-step reaction. The first step involved a dehydration of threonine and a production of enamine intermediates (aminocrotonate), which tautomerizes to its imine form (iminobutyrate). Both intermediates are unstable and short-lived. The second step is the nonenzymatic hydrolysis of the enamine/imine intermediates to form 2-ketobutyrate and free ammonia. In the low water environment of the cell, the second step is accelerated by RidA. The chain is L-threonine dehydratase biosynthetic IlvA (ilvA) from Pasteurella multocida (strain Pm70).